The sequence spans 197 residues: GTP cyclohydrolase 1 (197 aa).

Positions 88, 91, and 160 each coordinate Zn(2+).

The protein belongs to the GTP cyclohydrolase I family. As to quaternary structure, homomer.

It catalyses the reaction GTP + H2O = 7,8-dihydroneopterin 3'-triphosphate + formate + H(+). Its pathway is cofactor biosynthesis; 7,8-dihydroneopterin triphosphate biosynthesis; 7,8-dihydroneopterin triphosphate from GTP: step 1/1. The polypeptide is GTP cyclohydrolase 1 (Clostridium beijerinckii (strain ATCC 51743 / NCIMB 8052) (Clostridium acetobutylicum)).